Here is a 258-residue protein sequence, read N- to C-terminus: 5'-nucleotidase SurE (258 aa).

A divalent metal cation is bound by residues Asp8, Asp9, Ser39, and Asn95.

This sequence belongs to the SurE nucleotidase family. A divalent metal cation is required as a cofactor.

Its subcellular location is the cytoplasm. The enzyme catalyses a ribonucleoside 5'-phosphate + H2O = a ribonucleoside + phosphate. Functionally, nucleotidase that shows phosphatase activity on nucleoside 5'-monophosphates. The chain is 5'-nucleotidase SurE from Methanobrevibacter smithii (strain ATCC 35061 / DSM 861 / OCM 144 / PS).